Here is a 95-residue protein sequence, read N- to C-terminus: Co-chaperonin GroES (95 aa).

Belongs to the GroES chaperonin family. Heptamer of 7 subunits arranged in a ring. Interacts with the chaperonin GroEL.

Its subcellular location is the cytoplasm. Together with the chaperonin GroEL, plays an essential role in assisting protein folding. The GroEL-GroES system forms a nano-cage that allows encapsulation of the non-native substrate proteins and provides a physical environment optimized to promote and accelerate protein folding. GroES binds to the apical surface of the GroEL ring, thereby capping the opening of the GroEL channel. This Oleidesulfovibrio alaskensis (strain ATCC BAA-1058 / DSM 17464 / G20) (Desulfovibrio alaskensis) protein is Co-chaperonin GroES.